Consider the following 323-residue polypeptide: Transmembrane protein 171 (323 aa).

4 consecutive transmembrane segments (helical) span residues 22 to 42, 57 to 77, 112 to 132, and 159 to 179; these read IFFLFVFGAVLLCVGVLISIF, MVLKIAGPSCAVMGLGTVILA, LIFGFLFLTSGMLISILGIWV, and FLSLQIMGPLIVLVGLCFFVV. The segment covering 251–268 has biased composition (polar residues); that stretch reads YSSLFNLSRTPTPENQGA. Residues 251 to 323 form a disordered region; sequence YSSLFNLSRT…LGAPSESSPP (73 aa). Over residues 281–290 the composition is skewed to low complexity; that stretch reads SGPGSSSESS.

The protein localises to the membrane. This chain is Transmembrane protein 171 (Tmem171), found in Rattus norvegicus (Rat).